We begin with the raw amino-acid sequence, 342 residues long: Anthranilate phosphoribosyltransferase (342 aa).

5-phospho-alpha-D-ribose 1-diphosphate-binding positions include G80, 83–84 (GD), T88, 90–93 (NIST), 108–116 (KHGNRAVSS), and S120. G80 lines the anthranilate pocket. Mg(2+) is bound at residue S92. N111 contacts anthranilate. R166 provides a ligand contact to anthranilate. D225 and E226 together coordinate Mg(2+).

It belongs to the anthranilate phosphoribosyltransferase family. Homodimer. The cofactor is Mg(2+).

It carries out the reaction N-(5-phospho-beta-D-ribosyl)anthranilate + diphosphate = 5-phospho-alpha-D-ribose 1-diphosphate + anthranilate. The protein operates within amino-acid biosynthesis; L-tryptophan biosynthesis; L-tryptophan from chorismate: step 2/5. Functionally, catalyzes the transfer of the phosphoribosyl group of 5-phosphorylribose-1-pyrophosphate (PRPP) to anthranilate to yield N-(5'-phosphoribosyl)-anthranilate (PRA). The polypeptide is Anthranilate phosphoribosyltransferase (Halalkalibacterium halodurans (strain ATCC BAA-125 / DSM 18197 / FERM 7344 / JCM 9153 / C-125) (Bacillus halodurans)).